The chain runs to 252 residues: SPbeta prophage-derived uncharacterized protein YomH (252 aa).

In Bacillus subtilis (strain 168), this protein is SPbeta prophage-derived uncharacterized protein YomH (yomH).